The primary structure comprises 399 residues: 5'-C-glycyluridine monooxygenase-decarboxylase (399 aa).

Residue threonine 179 participates in phosphate binding. Residue lysine 230 is modified to N6-(pyridoxal phosphate)lysine. 4 residues coordinate phosphate: arginine 318, arginine 322, arginine 353, and arginine 367.

This sequence belongs to the SelA family. Homooctamer; tetramer of homodimers. It depends on pyridoxal 5'-phosphate as a cofactor.

It catalyses the reaction (5'S,6'R)-C-glycyluridine + O2 = uridine-5'-carboxamide + CO2 + H2O. Its pathway is antibiotic biosynthesis. Its activity is regulated as follows. Activity is dependent on phosphate. In terms of biological role, monooxygenase-decarboxylase involved in the biosynthesis of the capuramycin-type nucleoside antibiotic A-503083. Catalyzes the oxidative decarboxylation of 5'-C-glycyluridine (GlyU) to uridine-5'-carboxamide (CarU). Is stereospecific for the (5'S,6'R)-diastereomer of GlyU. Directly incorporates a single oxygen atom from O(2) into the product CarU. This chain is 5'-C-glycyluridine monooxygenase-decarboxylase, found in Streptomyces sp.